Reading from the N-terminus, the 473-residue chain is Photosystem II CP43 reaction center protein (473 aa).

Positions 1 to 14 (MKTLYSLRRFSHVE) are excised as a propeptide. Threonine 15 carries the N-acetylthreonine modification. A Phosphothreonine modification is found at threonine 15. The next 5 helical transmembrane spans lie at 69–93 (LFEV…PHLA), 134–155 (LLGP…KDRN), 178–200 (KALY…RKIT), 255–275 (KPFA…LSYS), and 291–312 (WFNN…ASQA). Position 367 (glutamate 367) interacts with [CaMn4O5] cluster. Residues 447-471 (RARAAAAGFEKGIDRDFEPVLSMTP) traverse the membrane as a helical segment.

It belongs to the PsbB/PsbC family. PsbC subfamily. In terms of assembly, PSII is composed of 1 copy each of membrane proteins PsbA, PsbB, PsbC, PsbD, PsbE, PsbF, PsbH, PsbI, PsbJ, PsbK, PsbL, PsbM, PsbT, PsbX, PsbY, PsbZ, Psb30/Ycf12, at least 3 peripheral proteins of the oxygen-evolving complex and a large number of cofactors. It forms dimeric complexes. Binds multiple chlorophylls and provides some of the ligands for the Ca-4Mn-5O cluster of the oxygen-evolving complex. It may also provide a ligand for a Cl- that is required for oxygen evolution. PSII binds additional chlorophylls, carotenoids and specific lipids. serves as cofactor.

It localises to the plastid membrane. In terms of biological role, one of the components of the core complex of photosystem II (PSII). It binds chlorophyll and helps catalyze the primary light-induced photochemical processes of PSII. PSII is a light-driven water:plastoquinone oxidoreductase, using light energy to abstract electrons from H(2)O, generating O(2) and a proton gradient subsequently used for ATP formation. The protein is Photosystem II CP43 reaction center protein of Cuscuta gronovii (Common dodder).